Consider the following 418-residue polypeptide: Actin-related protein 3-A (418 aa).

It belongs to the actin family. ARP3 subfamily. Component of the Arp2/3 complex composed of actr2/arp2, actr3/arp3, arpc1 (arpc1a or arpc1b), arpc2, arpc3, arpc4 and arpc5.

It localises to the cytoplasm. It is found in the cytoskeleton. The protein localises to the cell projection. Its subcellular location is the nucleus. Functionally, ATP-binding component of the Arp2/3 complex, a multiprotein complex that mediates actin polymerization upon stimulation by nucleation-promoting factor (NPF). The Arp2/3 complex mediates the formation of branched actin networks in the cytoplasm, providing the force for cell motility. Seems to contact the pointed end of the daughter actin filament. In addition to its role in the cytoplasmic cytoskeleton, the Arp2/3 complex also promotes actin polymerization in the nucleus, thereby regulating gene transcription and repair of damaged DNA. The Arp2/3 complex promotes homologous recombination (HR) repair in response to DNA damage by promoting nuclear actin polymerization, leading to drive motility of double-strand breaks (DSBs). The polypeptide is Actin-related protein 3-A (Xenopus laevis (African clawed frog)).